Here is a 102-residue protein sequence, read N- to C-terminus: Small ribosomal subunit protein uS10 (102 aa).

This sequence belongs to the universal ribosomal protein uS10 family. Part of the 30S ribosomal subunit.

Involved in the binding of tRNA to the ribosomes. The protein is Small ribosomal subunit protein uS10 of Thermobifida fusca (strain YX).